Here is a 492-residue protein sequence, read N- to C-terminus: Catalase (492 aa).

Catalysis depends on residues H65 and N138. Y348 contacts heme.

Belongs to the catalase family. In terms of assembly, homotetramer. It depends on heme as a cofactor.

It localises to the cytoplasm. Its subcellular location is the cytosol. The protein resides in the peroxisome matrix. It catalyses the reaction 2 H2O2 = O2 + 2 H2O. Catalyzes the degradation of hydrogen peroxide (H(2)O(2)) generated by peroxisomal oxidases to water and oxygen, thereby protecting cells from the toxic effects of hydrogen peroxide. The chain is Catalase from Helianthus annuus (Common sunflower).